A 208-amino-acid polypeptide reads, in one-letter code: Porimin (208 aa).

Positions 1 to 26 are cleaved as a signal peptide; the sequence is MGLGARGAWAALLLGTLQVLALLGAA. The Extracellular portion of the chain corresponds to 27–166; that stretch reads HESAAMAASA…EAKKGSKFDT (140 aa). Positions 42–57 are enriched in polar residues; sequence GLPHNSSANSTETLQH. Residues 42–125 are disordered; the sequence is GLPHNSSANS…PKTTSVSQNT (84 aa). Residues N46, N50, N64, N68, N83, N96, and N106 are each glycosylated (N-linked (GlcNAc...) asparagine). Residues 65-107 are compositionally biased toward polar residues; that stretch reads ETSNSTVKPPTSVASDSSNTTVTTMKPTAASNTTTPGMVSTNM. The segment covering 108–122 has biased composition (low complexity); the sequence is TSTTLKSTPKTTSVS. 2 N-linked (GlcNAc...) asparagine glycosylation sites follow: N124 and N138. The chain crosses the membrane as a helical span at residues 167–187; sequence GSFVGGIVLTLGVLSILYIGC. The Cytoplasmic portion of the chain corresponds to 188 to 208; it reads KMYYSRRGIRYRTIDEHDAII.

This sequence belongs to the CD164 family. Ubiquitous. Not expressed in ovary. Expressed in keratinocytes.

It is found in the membrane. In terms of biological role, implicated in oncotic cell death, characterized by cell swelling, organelle swelling, vacuolization and increased membrane permeability. This chain is Porimin (TMEM123), found in Homo sapiens (Human).